The chain runs to 453 residues: UDP-N-acetylmuramoylalanine--D-glutamate ligase (453 aa).

Gly117–Thr123 lines the ATP pocket.

Belongs to the MurCDEF family.

Its subcellular location is the cytoplasm. It catalyses the reaction UDP-N-acetyl-alpha-D-muramoyl-L-alanine + D-glutamate + ATP = UDP-N-acetyl-alpha-D-muramoyl-L-alanyl-D-glutamate + ADP + phosphate + H(+). The protein operates within cell wall biogenesis; peptidoglycan biosynthesis. In terms of biological role, cell wall formation. Catalyzes the addition of glutamate to the nucleotide precursor UDP-N-acetylmuramoyl-L-alanine (UMA). The protein is UDP-N-acetylmuramoylalanine--D-glutamate ligase of Caldicellulosiruptor saccharolyticus (strain ATCC 43494 / DSM 8903 / Tp8T 6331).